Reading from the N-terminus, the 69-residue chain is Brevinin-1CG5 (69 aa).

The signal sequence occupies residues 1–22 (MFTLKKSLLLLFFLGTINLSLC). A propeptide spans 23-43 (EQERNAEEERRDDDEMDVEVE) (removed in mature form). A disulfide bond links Cys63 and Cys69.

Belongs to the frog skin active peptide (FSAP) family. Brevinin subfamily. Expressed by the skin glands.

The protein localises to the secreted. Its function is as follows. Antimicrobial peptide active against a variety of Gram-positive and Gram-negative bacterial strains. Has antifungal activity against C.albicans ATCC 10231 and a slime mold isolate. Has hemolytic activity against human erythrocytes. This is Brevinin-1CG5 from Amolops chunganensis (Chungan torrent frog).